Consider the following 207-residue polypeptide: A-type ATP synthase subunit E (207 aa).

This sequence belongs to the V-ATPase E subunit family. Has multiple subunits with at least A(3), B(3), C, D, E, F, H, I and proteolipid K(x).

It is found in the cell membrane. In terms of biological role, component of the A-type ATP synthase that produces ATP from ADP in the presence of a proton gradient across the membrane. This chain is A-type ATP synthase subunit E, found in Hyperthermus butylicus (strain DSM 5456 / JCM 9403 / PLM1-5).